Reading from the N-terminus, the 212-residue chain is Phosphoribosylglycinamide formyltransferase (212 aa).

N(1)-(5-phospho-beta-D-ribosyl)glycinamide is bound at residue 12–14 (GTN). Residues 90-93 (MKIL) and Asn-107 contribute to the (6R)-10-formyltetrahydrofolate site. His-109 acts as the Proton donor in catalysis.

This sequence belongs to the GART family.

The enzyme catalyses N(1)-(5-phospho-beta-D-ribosyl)glycinamide + (6R)-10-formyltetrahydrofolate = N(2)-formyl-N(1)-(5-phospho-beta-D-ribosyl)glycinamide + (6S)-5,6,7,8-tetrahydrofolate + H(+). Its pathway is purine metabolism; IMP biosynthesis via de novo pathway; N(2)-formyl-N(1)-(5-phospho-D-ribosyl)glycinamide from N(1)-(5-phospho-D-ribosyl)glycinamide (10-formyl THF route): step 1/1. Functionally, catalyzes the transfer of a formyl group from 10-formyltetrahydrofolate to 5-phospho-ribosyl-glycinamide (GAR), producing 5-phospho-ribosyl-N-formylglycinamide (FGAR) and tetrahydrofolate. This Haemophilus influenzae (strain ATCC 51907 / DSM 11121 / KW20 / Rd) protein is Phosphoribosylglycinamide formyltransferase.